Here is a 187-residue protein sequence, read N- to C-terminus: Accessory gene regulator protein B (187 aa).

Transmembrane regions (helical) follow at residues 49–69 (ISIFLSVFLYTLVTHLSYMLI), 82–102 (ILCYIQSILIFVFVPYFLINI), 106–126 (FTYLLALSIIGLISVVIYAPA), 144–164 (VSIIMYLLVMILSLIIHPFYA), and 166–186 (FMLLGILVESITLLPIFFPKE).

This sequence belongs to the AgrB family.

Its subcellular location is the cell membrane. Essential for the production of a quorum sensing system signal molecule, the autoinducing peptide (AIP). This quorum sensing system is responsible for the regulation of the expression of virulence factor genes. Involved in the proteolytic processing of AgrD, the precursor of AIP. This chain is Accessory gene regulator protein B, found in Staphylococcus aureus (strain bovine RF122 / ET3-1).